A 456-amino-acid chain; its full sequence is UDP-glycosyltransferase 74D1 (456 aa).

UDP-alpha-D-glucose contacts are provided by residues Ser-279, Ser-332–Gln-334, His-349–Glu-357, and Tyr-371–Gln-374.

The protein belongs to the UDP-glycosyltransferase family. As to expression, expressed in leaves.

Glucosyltransferase that glucosylates jasmonate (JA) and JA derivatives. Also active on indole-3-acetic acid (IAA), 4-coumrate, cinnamate and caffeate. This is UDP-glycosyltransferase 74D1 (UGT74D1) from Arabidopsis thaliana (Mouse-ear cress).